Here is a 369-residue protein sequence, read N- to C-terminus: Aminomethyltransferase (369 aa).

Belongs to the GcvT family. As to quaternary structure, the glycine cleavage system is composed of four proteins: P, T, L and H.

The enzyme catalyses N(6)-[(R)-S(8)-aminomethyldihydrolipoyl]-L-lysyl-[protein] + (6S)-5,6,7,8-tetrahydrofolate = N(6)-[(R)-dihydrolipoyl]-L-lysyl-[protein] + (6R)-5,10-methylene-5,6,7,8-tetrahydrofolate + NH4(+). Functionally, the glycine cleavage system catalyzes the degradation of glycine. This is Aminomethyltransferase from Rippkaea orientalis (strain PCC 8801 / RF-1) (Cyanothece sp. (strain PCC 8801)).